Consider the following 366-residue polypeptide: Putative agmatine deiminase (366 aa).

The Amidino-cysteine intermediate role is filled by Cys357.

The protein belongs to the agmatine deiminase family.

It catalyses the reaction agmatine + H2O = N-carbamoylputrescine + NH4(+). This chain is Putative agmatine deiminase, found in Lactococcus lactis subsp. lactis (strain IL1403) (Streptococcus lactis).